Reading from the N-terminus, the 123-residue chain is WAP four-disulfide core domain protein 5 (123 aa).

The signal sequence occupies residues 1–24 (MRIQSLLLLGALLAVGSQLPAVFG). WAP domains lie at 27-73 (KGEK…CIPR) and 74-121 (VSVK…RDPA). 8 disulfides stabilise this stretch: Cys-34-Cys-62, Cys-41-Cys-66, Cys-49-Cys-61, Cys-55-Cys-70, Cys-81-Cys-109, Cys-88-Cys-113, Cys-96-Cys-108, and Cys-102-Cys-117.

The protein localises to the secreted. Functionally, putative acid-stable proteinase inhibitor. This is WAP four-disulfide core domain protein 5 (WFDC5) from Macaca mulatta (Rhesus macaque).